The chain runs to 736 residues: MSLSENSVFAYESSVHSTNVLLSLNDQRKKDVLCDVTIFVEGQRFRAHRSVLAACSSYFHSRIVGQADGELNITLPEEVTVKGFEPLIQFAYTAKLILSKENVDEVCKCVEFLSVHNIEESCFQFLKFKFLDSTADQQECPRKKCFSSHCQKTDLKLSLLDQRDLETDEVEEFLENKNVQTPQCKLRRYQGNAKASPPLQDSASQTYESMCLEKDAALALPSLCPKYRKFQKAFGTDRVRTGESSVKDIHASVQPNERSENECLGGVPECRDLQVMLKCDESKLAMEPEETKKDPASQCPTEKSEVTPFPHNSSIDPHGLYSLSLLHTYDQYGDLNFAGMQNTTVLTEKPLSGTDVQEKTFGESQDLPLKSDLGTREDSSVASSDRSSVEREVAEHLAKGFWSDICSTDTPCQMQLSPAVAKDGSEQISQKRSECPWLGIRISESPEPGQRTFTTLSSVNCPFISTLSTEGCSSNLEIGNDDYVSEPQQEPCPYACVISLGDDSETDTEGDSESCSAREQECEVKLPFNAQRIISLSRNDFQSLLKMHKLTPEQLDCIHDIRRRSKNRIAAQRCRKRKLDCIQNLESEIEKLQSEKESLLKERDHILSTLGETKQNLTGLCQKVCKEAALSQEQIQILAKYSAADCPLSFLISEKDKSTPDGELALPSIFSLSDRPPAVLPPCARGNSEPGYARGQESQQMSTATSEQAGPAEQCRQSGGISDFCQQMTDKCTTDE.

Residues 34–100 (CDVTIFVEGQ…AYTAKLILSK (67 aa)) form the BTB domain. Ser-196 bears the Phosphoserine mark. Positions 286 to 295 (MEPEETKKDP) are enriched in basic and acidic residues. 2 disordered regions span residues 286-312 (MEPE…FPHN) and 349-389 (KPLS…RSSV). Ser-364 and Ser-445 each carry phosphoserine. One can recognise a bZIP domain in the interval 557–620 (CIHDIRRRSK…GETKQNLTGL (64 aa)). The tract at residues 562-578 (RRRSKNRIAAQRCRKRK) is basic motif. The leucine-zipper stretch occupies residues 582–589 (IQNLESEI). The segment at 680–719 (LPPCARGNSEPGYARGQESQQMSTATSEQAGPAEQCRQSG) is disordered. Over residues 696–708 (QESQQMSTATSEQ) the composition is skewed to polar residues.

Belongs to the bZIP family. CNC subfamily. Heterodimer of BACH1 and MAFK. Post-translationally, ubiquitinated by the SCF(FBXL17) complex or by the by the SCF(FBXO22) complex, leading to its degradation by the proteasome. Under oxidative stress, reactive oxygen species covalently modify cysteine residues on the bZIP domain of BACH1 and release it from chromatin. If the BTB domain of BACH1 remains intact, its beta1-alpha6 degron is recognized by FBXO22, promoting its ubiquitination and degradation. If the structural integrity of the beta1-alpha6 degron is compromised, FBXL17 will transiently associate with the BACH1 BTB dimer and remodel it into stably bound monomer for ubiquitination and degradation.

It localises to the nucleus. Its function is as follows. Transcriptional regulator that acts as a repressor or activator, depending on the context. Binds to NF-E2 DNA binding sites. Plays important roles in coordinating transcription activation and repression by MAFK. Together with MAF, represses the transcription of genes under the control of the NFE2L2 oxidative stress pathway. This chain is Transcription regulator protein BACH1, found in Homo sapiens (Human).